Reading from the N-terminus, the 144-residue chain is 3-dehydroquinate dehydratase (144 aa).

Tyrosine 24 acts as the Proton acceptor in catalysis. 3 residues coordinate substrate: asparagine 76, histidine 82, and aspartate 89. The active-site Proton donor is histidine 102. Residues 103-104 (LS) and arginine 113 contribute to the substrate site.

It belongs to the type-II 3-dehydroquinase family. Homododecamer.

The enzyme catalyses 3-dehydroquinate = 3-dehydroshikimate + H2O. It functions in the pathway metabolic intermediate biosynthesis; chorismate biosynthesis; chorismate from D-erythrose 4-phosphate and phosphoenolpyruvate: step 3/7. In terms of biological role, catalyzes a trans-dehydration via an enolate intermediate. The polypeptide is 3-dehydroquinate dehydratase (Bordetella bronchiseptica (strain ATCC BAA-588 / NCTC 13252 / RB50) (Alcaligenes bronchisepticus)).